A 267-amino-acid chain; its full sequence is LexA repressor (267 aa).

Residues M1–R44 form a disordered region. Positions P20–K38 are enriched in basic and acidic residues. The H-T-H motif DNA-binding region spans I65–T85. Positions G111 to E140 are disordered. Polar residues predominate over residues Q112 to S129. Active-site for autocatalytic cleavage activity residues include S191 and K228.

The protein belongs to the peptidase S24 family. As to quaternary structure, homodimer.

It catalyses the reaction Hydrolysis of Ala-|-Gly bond in repressor LexA.. Represses a number of genes involved in the response to DNA damage (SOS response), including recA and lexA. In the presence of single-stranded DNA, RecA interacts with LexA causing an autocatalytic cleavage which disrupts the DNA-binding part of LexA, leading to derepression of the SOS regulon and eventually DNA repair. In Corynebacterium jeikeium (strain K411), this protein is LexA repressor.